The sequence spans 602 residues: 4-hydroxy-3-methylbut-2-en-1-yl diphosphate synthase (flavodoxin) (602 aa).

[4Fe-4S] cluster contacts are provided by cysteine 508, cysteine 511, cysteine 543, and glutamate 550.

It belongs to the IspG family. Requires [4Fe-4S] cluster as cofactor.

It catalyses the reaction (2E)-4-hydroxy-3-methylbut-2-enyl diphosphate + oxidized [flavodoxin] + H2O + 2 H(+) = 2-C-methyl-D-erythritol 2,4-cyclic diphosphate + reduced [flavodoxin]. Its pathway is isoprenoid biosynthesis; isopentenyl diphosphate biosynthesis via DXP pathway; isopentenyl diphosphate from 1-deoxy-D-xylulose 5-phosphate: step 5/6. Converts 2C-methyl-D-erythritol 2,4-cyclodiphosphate (ME-2,4cPP) into 1-hydroxy-2-methyl-2-(E)-butenyl 4-diphosphate. The protein is 4-hydroxy-3-methylbut-2-en-1-yl diphosphate synthase (flavodoxin) of Chlamydia trachomatis serovar D (strain ATCC VR-885 / DSM 19411 / UW-3/Cx).